The following is a 1035-amino-acid chain: DNA polymerase catalytic subunit (1035 aa).

Belongs to the DNA polymerase type-B family.

The protein localises to the host nucleus. The enzyme catalyses DNA(n) + a 2'-deoxyribonucleoside 5'-triphosphate = DNA(n+1) + diphosphate. The polypeptide is DNA polymerase catalytic subunit (UL54) (Macaca mulatta (Rhesus macaque)).